A 494-amino-acid chain; its full sequence is mRNA decay activator protein ZFP36L2 (494 aa).

A Phosphoserine modification is found at Ser57. Residues 93–113 are disordered; that stretch reads GGPTSYGTLKEPSGGGGTALL. At Ser125 the chain carries Phosphoserine. Residues 153–158 carry the RNA-binding motif; that stretch reads RYKTEL. 2 consecutive C3H1-type zinc fingers follow at residues 153–181 and 191–219; these read RYKT…HGFH and KYKT…HNAD. The interval 170 to 211 is RNA-binding; that stretch reads YGEKCQFAHGFHELRSLTRHPKYKTELCRTFHTIGFCPYGPR. Thr238 carries the phosphothreonine modification. 2 disordered regions span residues 257–293 and 397–494; these read SLSF…PPSC and QQQQ…ISDD. The segment covering 406 to 415 has biased composition (pro residues); that stretch reads PAQPPAPPSA. Composition is skewed to low complexity over residues 416-435 and 459-478; these read TLPA…QLPR and YLSG…PSLD. 2 positions are modified to phosphoserine; by RPS6KA1: Ser490 and Ser492.

In terms of assembly, associates with the cytoplasmic CCR4-NOT deadenylase to trigger ARE-containing mRNA deadenylation and decay processes. Interacts with CNOT7; this interaction is inhibited in response to phorbol 12-myristate 13-acetate (PMA) treatment in a p38 MAPK-dependent manner. Interacts with CNOT6L. In terms of processing, phosphorylated by RPS6KA1 at Ser-490 and Ser-492 upon phorbol 12-myristate 13-acetate (PMA) treatment; this phosphorylation results in dissociation of the CCR4-NOT-deadenylase complex and induces p38 MAPK-mediated stabilization of the low-density lipoprotein (LDL) receptor (LDLR) mRNA. Phosphorylation occurs during early preadipocyte differentiation. As to expression, expressed mainly in the basal epidermal layer, weakly in the suprabasal epidermal layers. Expressed in epidermal keratinocytes (at protein level). Expressed in oocytes.

It localises to the nucleus. It is found in the cytoplasm. In terms of biological role, zinc-finger RNA-binding protein that destabilizes several cytoplasmic AU-rich element (ARE)-containing mRNA transcripts by promoting their poly(A) tail removal or deadenylation, and hence provide a mechanism for attenuating protein synthesis. Acts as a 3'-untranslated region (UTR) ARE mRNA-binding adapter protein to communicate signaling events to the mRNA decay machinery. Functions by recruiting the CCR4-NOT deadenylase complex and probably other components of the cytoplasmic RNA decay machinery to the bound ARE-containing mRNAs, and hence promotes ARE-mediated mRNA deadenylation and decay processes. Binds to 3'-UTR ARE of numerous mRNAs. Promotes ARE-containing mRNA decay of the low-density lipoprotein (LDL) receptor (LDLR) mRNA in response to phorbol 12-myristate 13-acetate (PMA) treatment in a p38 MAPK-dependent manner. Positively regulates early adipogenesis by promoting ARE-mediated mRNA decay of immediate early genes (IEGs). Plays a role in mature peripheral neuron integrity by promoting ARE-containing mRNA decay of the transcriptional repressor REST mRNA. Plays a role in ovulation and oocyte meiotic maturation by promoting ARE-mediated mRNA decay of the luteinizing hormone receptor LHCGR mRNA. Acts as a negative regulator of erythroid cell differentiation: promotes glucocorticoid-induced self-renewal of erythroid cells by binding mRNAs that are induced or highly expressed during terminal erythroid differentiation and promotes their degradation, preventing erythroid cell differentiation. In association with ZFP36L1 maintains quiescence on developing B lymphocytes by promoting ARE-mediated decay of several mRNAs encoding cell cycle regulators that help B cells progress through the cell cycle, and hence ensuring accurate variable-diversity-joining (VDJ) recombination process and functional immune cell formation. Together with ZFP36L1 is also necessary for thymocyte development and prevention of T-cell acute lymphoblastic leukemia (T-ALL) transformation by promoting ARE-mediated mRNA decay of the oncogenic transcription factor NOTCH1 mRNA. The protein is mRNA decay activator protein ZFP36L2 of Homo sapiens (Human).